A 524-amino-acid chain; its full sequence is RNA-binding protein 39 (524 aa).

The interval 1-146 (MADDIDIEAM…PVREPIDNLT (146 aa)) is disordered. The residue at position 2 (Ala2) is an N-acetylalanine. The segment covering 14 to 32 (PYKKDENKLSSANGHEERS) has biased composition (basic and acidic residues). Basic residues-rich tracts occupy residues 33 to 56 (KKRKKSKSRSRSHERKRSKSKERK) and 64 to 95 (KKSKSRERKRSRSKERRRSRSRSRDRRFRGRY). The residue at position 95 (Tyr95) is a Phosphotyrosine. A phosphoserine mark is found at Ser97 and Ser100. A Glycyl lysine isopeptide (Lys-Gly) (interchain with G-Cter in SUMO2) cross-link involves residue Lys111. Ser117 carries the post-translational modification Phosphoserine. Lys119 participates in a covalent cross-link: Glycyl lysine isopeptide (Lys-Gly) (interchain with G-Cter in SUMO2). Positions 119 to 130 (KLSRRRSRSKSP) are enriched in basic residues. 2 positions are modified to phosphoserine: Ser121 and Ser136. Positions 131–146 (FRKDKSPVREPIDNLT) are enriched in basic and acidic residues. Phosphothreonine is present on Thr146. The region spanning 153–230 (RTVFCMQLAA…VPIIVQASQA (78 aa)) is the RRM 1 domain. Lys244 is covalently cross-linked (Glycyl lysine isopeptide (Lys-Gly) (interchain with G-Cter in SUMO2)). An RRM 2 domain is found at 250-328 (MRLYVGSLHF…RPMKVGHVTE (79 aa)). The tract at residues 291–355 (KGYGFITFSD…RTGIDLGTTG (65 aa)) is activating domain. The segment at 291 to 400 (KGYGFITFSD…ADLQTRLSQQ (110 aa)) is interaction with JUN. Residues Ser334, Ser337, and Ser341 each carry the phosphoserine modification. Residues 355-400 (GRLQLMARLAEGTGLQIPPAAQQALQMSGSLAFGAVADLQTRLSQQ) are interaction with ESR1 and ESR2. The segment at 400 to 524 (QTEASALAAA…ATQLLVPSRR (125 aa)) is interaction with NCOA6. Residues 439 to 502 (EIKDDVIEEC…KMITAAYVPL (64 aa)) enclose the RRM 3 domain.

This sequence belongs to the splicing factor SR family. As to quaternary structure, interacts with NCOA6 and JUN. Interacts with ESR1 and ESR2, in the presence of estradiol (E2). Interacts with RSRC1 (via Arg/Ser-rich domain). Interacts with SF3B1. Interacts with ZNF106 (via N-terminus).

Its subcellular location is the nucleus speckle. In terms of biological role, RNA-binding protein that acts as a pre-mRNA splicing factor. Acts by promoting exon inclusion via regulation of exon cassette splicing. Also acts as a transcriptional coactivator for steroid nuclear receptors ESR1/ER-alpha and ESR2/ER-beta, and JUN/AP-1, independently of the pre-mRNA splicing factor activity. The protein is RNA-binding protein 39 (RBM39) of Pongo abelii (Sumatran orangutan).